The primary structure comprises 180 residues: Large ribosomal subunit protein uL5c (180 aa).

Belongs to the universal ribosomal protein uL5 family. In terms of assembly, part of the 50S ribosomal subunit; contacts the 5S rRNA.

The protein localises to the plastid. It localises to the chloroplast. In terms of biological role, binds 5S rRNA, forms part of the central protuberance of the 50S subunit. This Stigeoclonium helveticum (Green alga) protein is Large ribosomal subunit protein uL5c (rpl5).